A 353-amino-acid chain; its full sequence is MTATLERRESASLWGRFCNWITSTENRLYIGWFGVLMIPTLLTATSVFIIAFIAAPPVDIDGIREPVSGSLLYGNNIISGAIIPTSAAIGLHFYPIWEAASVDEWLYNGGPYELIVLHFLLGVACYMGREWELSFRLGMRPWIAVAYSAPVAAATAVFLIYPIGQGSFSDGMPLGISGTFNFMIVFQAEHNILMHPFHMLGVAGVFGGSLFSAMHGSLVTSSLIRETTENESANAGYKFGQEEETYNIVAAHGYFGRLIFQYASFNNSRSLHFFLAAWPVVGIWFTALGISTMAFNLNGFNFNQSVVDSQGRVINTWADIINRANLGMEVMHERNAHNFPLDLASIEAPLVNG.

Position 2 is an N-acetylthreonine (Thr2). Thr2 is subject to Phosphothreonine. Transmembrane regions (helical) follow at residues 29–46 (YIGW…TATS), 118–133 (HFLL…EWEL), and 142–156 (WIAV…AATA). A chlorophyll a-binding site is contributed by His118. Tyr126 provides a ligand contact to pheophytin a. [CaMn4O5] cluster-binding residues include Asp170 and Glu189. A helical membrane pass occupies residues 197–218 (FHMLGVAGVFGGSLFSAMHGSL). Position 198 (His198) interacts with chlorophyll a. Residues His215 and 264 to 265 (SF) contribute to the a quinone site. Fe cation is bound at residue His215. Position 272 (His272) interacts with Fe cation. The helical transmembrane segment at 274-288 (FLAAWPVVGIWFTAL) threads the bilayer. The [CaMn4O5] cluster site is built by His332, Glu333, Asp342, and Ala344. Positions 345 to 353 (SIEAPLVNG) are excised as a propeptide.

Belongs to the reaction center PufL/M/PsbA/D family. PSII is composed of 1 copy each of membrane proteins PsbA, PsbB, PsbC, PsbD, PsbE, PsbF, PsbH, PsbI, PsbJ, PsbK, PsbL, PsbM, PsbT, PsbX, PsbY, PsbZ, Psb30/Ycf12, at least 3 peripheral proteins of the oxygen-evolving complex and a large number of cofactors. It forms dimeric complexes. The D1/D2 heterodimer binds P680, chlorophylls that are the primary electron donor of PSII, and subsequent electron acceptors. It shares a non-heme iron and each subunit binds pheophytin, quinone, additional chlorophylls, carotenoids and lipids. D1 provides most of the ligands for the Mn4-Ca-O5 cluster of the oxygen-evolving complex (OEC). There is also a Cl(-1) ion associated with D1 and D2, which is required for oxygen evolution. The PSII complex binds additional chlorophylls, carotenoids and specific lipids. serves as cofactor. Post-translationally, tyr-161 forms a radical intermediate that is referred to as redox-active TyrZ, YZ or Y-Z. C-terminally processed by CTPA; processing is essential to allow assembly of the oxygen-evolving complex and thus photosynthetic growth.

The protein localises to the plastid. It localises to the chloroplast thylakoid membrane. The catalysed reaction is 2 a plastoquinone + 4 hnu + 2 H2O = 2 a plastoquinol + O2. Functionally, photosystem II (PSII) is a light-driven water:plastoquinone oxidoreductase that uses light energy to abstract electrons from H(2)O, generating O(2) and a proton gradient subsequently used for ATP formation. It consists of a core antenna complex that captures photons, and an electron transfer chain that converts photonic excitation into a charge separation. The D1/D2 (PsbA/PsbD) reaction center heterodimer binds P680, the primary electron donor of PSII as well as several subsequent electron acceptors. The polypeptide is Photosystem II protein D1 (Psilotum nudum (Whisk fern)).